A 168-amino-acid chain; its full sequence is 2-oxo-4-hydroxy-4-carboxy-5-ureidoimidazoline decarboxylase (168 aa).

Catalysis depends on His-70, which acts as the Proton donor; for OHCU decarboxylase activity. Over residues 70–79 (HPDLGERTEM) the composition is skewed to basic and acidic residues. A disordered region spans residues 70–93 (HPDLGERTEMTDASEAEQASAELD). Substrate is bound by residues Pro-71, 83–87 (SEAEQ), and 118–122 (FVMAV).

Belongs to the OHCU decarboxylase family.

The enzyme catalyses 5-hydroxy-2-oxo-4-ureido-2,5-dihydro-1H-imidazole-5-carboxylate + H(+) = (S)-allantoin + CO2. It functions in the pathway purine metabolism; urate degradation; (S)-allantoin from urate: step 3/3. Catalyzes the stereoselective decarboxylation of 2-oxo-4-hydroxy-4-carboxy-5-ureidoimidazoline (OHCU) to (S)-allantoin. This chain is 2-oxo-4-hydroxy-4-carboxy-5-ureidoimidazoline decarboxylase, found in Haloferax volcanii (strain ATCC 29605 / DSM 3757 / JCM 8879 / NBRC 14742 / NCIMB 2012 / VKM B-1768 / DS2) (Halobacterium volcanii).